A 203-amino-acid polypeptide reads, in one-letter code: Histidine biosynthesis bifunctional protein HisIE (203 aa).

A phosphoribosyl-AMP cyclohydrolase region spans residues 1–108; the sequence is MELDFDKMNG…GEKNEEPVMF (108 aa). A phosphoribosyl-ATP pyrophosphohydrolase region spans residues 109-203; that stretch reads LKALQDFIDK…ERHSSTWKKH (95 aa).

It in the N-terminal section; belongs to the PRA-CH family. This sequence in the C-terminal section; belongs to the PRA-PH family.

Its subcellular location is the cytoplasm. It carries out the reaction 1-(5-phospho-beta-D-ribosyl)-ATP + H2O = 1-(5-phospho-beta-D-ribosyl)-5'-AMP + diphosphate + H(+). It catalyses the reaction 1-(5-phospho-beta-D-ribosyl)-5'-AMP + H2O = 1-(5-phospho-beta-D-ribosyl)-5-[(5-phospho-beta-D-ribosylamino)methylideneamino]imidazole-4-carboxamide. It functions in the pathway amino-acid biosynthesis; L-histidine biosynthesis; L-histidine from 5-phospho-alpha-D-ribose 1-diphosphate: step 2/9. It participates in amino-acid biosynthesis; L-histidine biosynthesis; L-histidine from 5-phospho-alpha-D-ribose 1-diphosphate: step 3/9. The sequence is that of Histidine biosynthesis bifunctional protein HisIE from Bacteroides thetaiotaomicron (strain ATCC 29148 / DSM 2079 / JCM 5827 / CCUG 10774 / NCTC 10582 / VPI-5482 / E50).